The sequence spans 106 residues: Large ribosomal subunit protein eL42 (106 aa).

This sequence belongs to the eukaryotic ribosomal protein eL42 family.

The polypeptide is Large ribosomal subunit protein eL42 (RPL44) (Yarrowia lipolytica (strain CLIB 122 / E 150) (Yeast)).